Consider the following 429-residue polypeptide: MTVFSVQSTIFSRASVALLSSNGFKRFSFVSSFSSSAAYSPPKMRKRRYPIVSAVDIGGVAIARNDVVREDDPTNNVPDSIFSKLGMQLHRRDKHPIGILKNAIYDYFDSNYSNKFEKFEDLSPIVTTKQNFDDVLVPADHVSRSLNDTYYVDSQTVLRCHTSAHQAELLRKGHSRFLVTGDVYRRDSIDSTHYPVFHQMEGFCVFSPEDWNGSGKDSTLYAAEDLKKCLEGLARHLFGSVEMRWVDTYFPFTNPSFELEIYFKEDWLEVLGCGVTEQVILKQSGLENNVAWAFGLGLERLAMVLFDIPDIRFFWSSDERFTSQFGKGELGVKFKPYSKYPPCYKDISFWISDLFTENNFCEVVRGIAGDLVEEVKLIDQFTNKKKGLTSHCYRIVFRSMERSLTDEEVNDLQSKVRDEVQKKLNVELR.

A chloroplast and mitochondrion-targeting transit peptide spans 1–53 (MTVFSVQSTIFSRASVALLSSNGFKRFSFVSSFSSSAAYSPPKMRKRRYPIVS). An N-acetylalanine modification is found at Ala-54. Substrate is bound by residues 163 to 166 (SAHQ), Arg-185, 192 to 194 (THY), 199 to 201 (QME), Glu-269, and Phe-294. Residues 338–429 (SKYPPCYKDI…VQKKLNVELR (92 aa)) enclose the FDX-ACB domain.

Belongs to the class-II aminoacyl-tRNA synthetase family. In terms of assembly, monomer.

It localises to the plastid. Its subcellular location is the chloroplast stroma. The protein resides in the mitochondrion matrix. The enzyme catalyses tRNA(Phe) + L-phenylalanine + ATP = L-phenylalanyl-tRNA(Phe) + AMP + diphosphate + H(+). Functionally, is responsible for the charging of tRNA(Phe) with phenylalanine in mitochondrial translation. The polypeptide is Phenylalanine--tRNA ligase, chloroplastic/mitochondrial (Arabidopsis thaliana (Mouse-ear cress)).